The sequence spans 152 residues: Protein SprT-like (152 aa).

The SprT-like domain occupies 7 to 147; the sequence is QRLVEEVSLQ…CGKCKGKLKP (141 aa). Residue His-67 participates in Zn(2+) binding. Glu-68 is an active-site residue. Residue His-71 coordinates Zn(2+).

It belongs to the SprT family. It depends on Zn(2+) as a cofactor.

The protein resides in the cytoplasm. This Bacillus cereus (strain G9842) protein is Protein SprT-like.